The primary structure comprises 490 residues: Protein U94 (490 aa).

The 210-residue stretch at 1–210 folds into the PV NS1-Nuc domain; it reads MFSIINPSDD…SHFNKKPNVK (210 aa). One can recognise an SF3 helicase domain in the interval 312 to 463; that stretch reads DPILAGTILY…IPRNFPVIQK (152 aa). ATP is bound at residue 338–345; that stretch reads GPPGCGKS.

It is found in the host nucleus. In Human herpesvirus 6B (HHV-6 variant B), this protein is Protein U94 (U94).